A 375-amino-acid polypeptide reads, in one-letter code: Anhydro-N-acetylmuramic acid kinase (375 aa).

13–20 (GTSMDGVD) serves as a coordination point for ATP.

Belongs to the anhydro-N-acetylmuramic acid kinase family.

It carries out the reaction 1,6-anhydro-N-acetyl-beta-muramate + ATP + H2O = N-acetyl-D-muramate 6-phosphate + ADP + H(+). The protein operates within amino-sugar metabolism; 1,6-anhydro-N-acetylmuramate degradation. It participates in cell wall biogenesis; peptidoglycan recycling. Its function is as follows. Catalyzes the specific phosphorylation of 1,6-anhydro-N-acetylmuramic acid (anhMurNAc) with the simultaneous cleavage of the 1,6-anhydro ring, generating MurNAc-6-P. Is required for the utilization of anhMurNAc either imported from the medium or derived from its own cell wall murein, and thus plays a role in cell wall recycling. The sequence is that of Anhydro-N-acetylmuramic acid kinase from Pelagibacter ubique (strain HTCC1062).